Reading from the N-terminus, the 242-residue chain is Aspartate/glutamate leucyltransferase (242 aa).

The protein belongs to the R-transferase family. Bpt subfamily.

The protein localises to the cytoplasm. It catalyses the reaction N-terminal L-glutamyl-[protein] + L-leucyl-tRNA(Leu) = N-terminal L-leucyl-L-glutamyl-[protein] + tRNA(Leu) + H(+). The catalysed reaction is N-terminal L-aspartyl-[protein] + L-leucyl-tRNA(Leu) = N-terminal L-leucyl-L-aspartyl-[protein] + tRNA(Leu) + H(+). Its function is as follows. Functions in the N-end rule pathway of protein degradation where it conjugates Leu from its aminoacyl-tRNA to the N-termini of proteins containing an N-terminal aspartate or glutamate. The protein is Aspartate/glutamate leucyltransferase of Alcanivorax borkumensis (strain ATCC 700651 / DSM 11573 / NCIMB 13689 / SK2).